Reading from the N-terminus, the 390-residue chain is 8-amino-7-oxononanoate synthase (390 aa).

A substrate-binding site is contributed by Arg22. 109-110 (GY) provides a ligand contact to pyridoxal 5'-phosphate. Substrate is bound at residue His134. Residues Ser180, His208, and Thr236 each contribute to the pyridoxal 5'-phosphate site. Position 239 is an N6-(pyridoxal phosphate)lysine (Lys239). A substrate-binding site is contributed by Thr353.

This sequence belongs to the class-II pyridoxal-phosphate-dependent aminotransferase family. BioF subfamily. Homodimer. Pyridoxal 5'-phosphate is required as a cofactor.

It catalyses the reaction 6-carboxyhexanoyl-[ACP] + L-alanine + H(+) = (8S)-8-amino-7-oxononanoate + holo-[ACP] + CO2. The protein operates within cofactor biosynthesis; biotin biosynthesis. Catalyzes the decarboxylative condensation of pimeloyl-[acyl-carrier protein] and L-alanine to produce 8-amino-7-oxononanoate (AON), [acyl-carrier protein], and carbon dioxide. The polypeptide is 8-amino-7-oxononanoate synthase (Azoarcus sp. (strain BH72)).